Consider the following 445-residue polypeptide: 3-phosphoshikimate 1-carboxyvinyltransferase (445 aa).

A compositionally biased stretch (polar residues) spans 1–20; sequence MSSTHPGRTIRSGATQNLSG. Residues 1–24 are disordered; that stretch reads MSSTHPGRTIRSGATQNLSGTIRP. Residues lysine 28, serine 29, and arginine 33 each coordinate 3-phosphoshikimate. A phosphoenolpyruvate-binding site is contributed by lysine 28. 2 residues coordinate phosphoenolpyruvate: glycine 101 and arginine 129. Residues serine 174, glutamine 176, aspartate 322, and lysine 349 each coordinate 3-phosphoshikimate. Phosphoenolpyruvate is bound at residue glutamine 176. Catalysis depends on aspartate 322, which acts as the Proton acceptor. 2 residues coordinate phosphoenolpyruvate: arginine 353 and arginine 397.

The protein belongs to the EPSP synthase family. In terms of assembly, monomer.

It localises to the cytoplasm. It carries out the reaction 3-phosphoshikimate + phosphoenolpyruvate = 5-O-(1-carboxyvinyl)-3-phosphoshikimate + phosphate. Its pathway is metabolic intermediate biosynthesis; chorismate biosynthesis; chorismate from D-erythrose 4-phosphate and phosphoenolpyruvate: step 6/7. In terms of biological role, catalyzes the transfer of the enolpyruvyl moiety of phosphoenolpyruvate (PEP) to the 5-hydroxyl of shikimate-3-phosphate (S3P) to produce enolpyruvyl shikimate-3-phosphate and inorganic phosphate. The polypeptide is 3-phosphoshikimate 1-carboxyvinyltransferase (Magnetococcus marinus (strain ATCC BAA-1437 / JCM 17883 / MC-1)).